Consider the following 100-residue polypeptide: Acylphosphatase (100 aa).

One can recognise an Acylphosphatase-like domain in the interval Arg14 to Ser100. Catalysis depends on residues Arg29 and Asn47.

Belongs to the acylphosphatase family.

It carries out the reaction an acyl phosphate + H2O = a carboxylate + phosphate + H(+). This chain is Acylphosphatase (acyP), found in Synechococcus sp. (strain WH7803).